The following is a 1152-amino-acid chain: Fork-head transcriptional regulator FHL1 (1152 aa).

Residues T55–N147 are disordered. The segment covering S64–A83 has biased composition (basic and acidic residues). Residues T87–S101 show a composition bias toward low complexity. Over residues V126–L135 the composition is skewed to polar residues. The 59-residue stretch at V171–V229 folds into the FHA domain. Disordered regions lie at residues L254 to S362 and K514 to S557. Residues K271–Y286 are compositionally biased toward polar residues. Basic residues predominate over residues P296–K307. A compositionally biased stretch (low complexity) spans T328–A358. Coiled coils occupy residues D449 to K537 and E734 to L777. The fork-head DNA-binding region spans K659 to K756. 4 disordered regions span residues A787–P833, R846–P867, H951–Q1010, and P1057–E1152. Low complexity-rich tracts occupy residues S804–T826, T851–A863, and T973–Q987. Pro residues-rich tracts occupy residues V996–Q1006 and T1072–S1082. 2 stretches are compositionally biased toward polar residues: residues S1115–P1128 and Q1143–E1152.

As to quaternary structure, interacts with IFH1 and TBF1.

The protein localises to the nucleus. In complex with IFH1, acts as a transcriptional regulator of rRNA and ribosomal protein genes. The FHL1-IFH1 complex is targeted to the ribosomal protein genes by the DNA-binding factor TBF1. This chain is Fork-head transcriptional regulator FHL1 (FHL1), found in Candida albicans (strain SC5314 / ATCC MYA-2876) (Yeast).